The sequence spans 548 residues: CTP synthase (548 aa).

The interval 1-270 is amidoligase domain; it reads MTKYVFVTGG…DNIVCEALGL (270 aa). S13 serves as a coordination point for CTP. S13 provides a ligand contact to UTP. ATP is bound by residues 14 to 19 and D71; that span reads SLGKGI. D71 and E144 together coordinate Mg(2+). Residues 151 to 153, 191 to 196, and K227 each bind CTP; these read DIE and KTKPTQ. UTP-binding positions include 191–196 and K227; that span reads KTKPTQ. In terms of domain architecture, Glutamine amidotransferase type-1 spans 295–545; it reads TIGMVGKYVD…IEAAIANHAR (251 aa). G356 lines the L-glutamine pocket. Catalysis depends on C383, which acts as the Nucleophile; for glutamine hydrolysis. L-glutamine is bound by residues 384–387, E407, and R473; that span reads LGMQ. Catalysis depends on residues H518 and E520.

The protein belongs to the CTP synthase family. In terms of assembly, homotetramer.

The enzyme catalyses UTP + L-glutamine + ATP + H2O = CTP + L-glutamate + ADP + phosphate + 2 H(+). The catalysed reaction is L-glutamine + H2O = L-glutamate + NH4(+). It catalyses the reaction UTP + NH4(+) + ATP = CTP + ADP + phosphate + 2 H(+). Its pathway is pyrimidine metabolism; CTP biosynthesis via de novo pathway; CTP from UDP: step 2/2. With respect to regulation, allosterically activated by GTP, when glutamine is the substrate; GTP has no effect on the reaction when ammonia is the substrate. The allosteric effector GTP functions by stabilizing the protein conformation that binds the tetrahedral intermediate(s) formed during glutamine hydrolysis. Inhibited by the product CTP, via allosteric rather than competitive inhibition. In terms of biological role, catalyzes the ATP-dependent amination of UTP to CTP with either L-glutamine or ammonia as the source of nitrogen. Regulates intracellular CTP levels through interactions with the four ribonucleotide triphosphates. This is CTP synthase from Bordetella petrii (strain ATCC BAA-461 / DSM 12804 / CCUG 43448).